The following is a 959-amino-acid chain: Bifunctional premutilin synthase (959 aa).

Residues 1–542 (MGLSEDLHAR…ALNVPIPRFD (542 aa)) form a class II diterpene cyclase region. Residues 309 to 312 (DADM) carry the DXDD motif motif. D311 acts as the For class II diterpene cyclase activity in catalysis. The interval 543-959 (PSSISTLPAI…TANGSNGIHH (417 aa)) is class I diterpene synthase. The active-site For class I diterpene synthase activity is D649. Residues D649, D653, and N824 each coordinate Mg(2+). A DDXXD motif motif is present at residues 649-653 (DDYLD). Positions 931–959 (KGTNGVKKINGSSTNGTKVTANGSNGIHH) are disordered. Polar residues predominate over residues 940–959 (NGSSTNGTKVTANGSNGIHH).

Belongs to the terpene synthase family. Requires Mg(2+) as cofactor.

Its pathway is secondary metabolite biosynthesis; terpenoid biosynthesis. Its function is as follows. Bifunctional premutilin synthase; part of the gene cluster that mediates the biosynthesis of pleuromutilin, a tricyclic diterpene showing antibacterial properties. The geranylgeranyl diphosphate (GGPP) synthase catalyzes the first step in pleuromutilin biosynthesis. GGPP is then substrate of the premutilin synthase (PS) to yield premutilin. Premutilin synthase is a bifunctional enzyme composed of the fusion of a class II diterpene cyclase (DTC) and a class I diterpene synthase (DTS), with the corresponding domains and active sites containing characteristic aspartate-rich motifs. GGPP is first converted to mutildienyl-diphosphate (MPP) at the class II DTC site. MPP is subsequently further cyclized at the class I DTS site, followed by a 1,5-hydride shift and addition of water prior to terminating deprotonation, to yield premutilin. In addition to the aforementioned GGPP synthase and bifunctional diterpene synthase, the cluster also contains three cytochrome P450 monooxygenases, a short-chain alcohol dehydrogenase, and an acyltransferase, involved in the conversion of premutilin to pleuromutilin. The cytochrome P450 monooxygenases P450-1 and P450-2 hydroxylate premutilin at C-11 and C-3, respectively, producing 11-hydroxypremutilin and 3-hydroxypremutilin. The combination of the actions of both ple5 and ple6 leads to the production of 3,11-dihydroxypremutilin. The short chain dehydrogenase SDR further converts 3,11-dihydroxypremutilin into mutilin. The acetyltransferase ATF then acetylates mutilin to produce 14-O-acetylmutilin. Finally, the cytochrome P450 monooxygenase P450-3 catalyzes hydroxylation on the alpha position of the acetyl side chain of 14-O-acetylmutilin to yield pleuromutilin. This Clitopilus passeckerianus (Pleurotus passeckerianus) protein is Bifunctional premutilin synthase.